The primary structure comprises 213 residues: Octanoyltransferase (213 aa).

A BPL/LPL catalytic domain is found at 28-203; that stretch reads GTSPETLLLL…RFPFLLDERL (176 aa). Residues 66 to 73, 133 to 135, and 146 to 148 contribute to the substrate site; these read RGGDVTFH, SIG, and GFA. Cys164 (acyl-thioester intermediate) is an active-site residue.

The protein belongs to the LipB family.

The protein resides in the cytoplasm. The catalysed reaction is octanoyl-[ACP] + L-lysyl-[protein] = N(6)-octanoyl-L-lysyl-[protein] + holo-[ACP] + H(+). Its pathway is protein modification; protein lipoylation via endogenous pathway; protein N(6)-(lipoyl)lysine from octanoyl-[acyl-carrier-protein]: step 1/2. In terms of biological role, catalyzes the transfer of endogenously produced octanoic acid from octanoyl-acyl-carrier-protein onto the lipoyl domains of lipoate-dependent enzymes. Lipoyl-ACP can also act as a substrate although octanoyl-ACP is likely to be the physiological substrate. In Geobacter metallireducens (strain ATCC 53774 / DSM 7210 / GS-15), this protein is Octanoyltransferase.